Here is a 123-residue protein sequence, read N- to C-terminus: Thioredoxin domain-containing protein 17 (123 aa).

Residues 41-123 (SWCPDCVKAE…DLVRMMFTED (83 aa)) enclose the Thioredoxin domain. Active-site nucleophile residues include cysteine 43 and cysteine 46. Cysteine 43 and cysteine 46 are disulfide-bonded.

The protein belongs to the thioredoxin family.

The protein resides in the cytoplasm. Disulfide reductase. May participate in various redox reactions through the reversible oxidation of its active center dithiol to a disulfide and catalyze dithiol-disulfide exchange reactions. Has peroxidase activity and may contribute to the elimination of cellular hydrogen peroxide. This is Thioredoxin domain-containing protein 17 (txndc17) from Danio rerio (Zebrafish).